The chain runs to 696 residues: Glycine--tRNA ligase beta subunit (696 aa).

The protein belongs to the class-II aminoacyl-tRNA synthetase family. As to quaternary structure, tetramer of two alpha and two beta subunits.

Its subcellular location is the cytoplasm. It carries out the reaction tRNA(Gly) + glycine + ATP = glycyl-tRNA(Gly) + AMP + diphosphate. The sequence is that of Glycine--tRNA ligase beta subunit from Methylorubrum extorquens (strain CM4 / NCIMB 13688) (Methylobacterium extorquens).